Here is a 314-residue protein sequence, read N- to C-terminus: DNA-directed RNA polymerase subunit alpha (314 aa).

The alpha N-terminal domain (alpha-NTD) stretch occupies residues Met1–Asn228. The alpha C-terminal domain (alpha-CTD) stretch occupies residues Pro243–Ala314.

This sequence belongs to the RNA polymerase alpha chain family. In terms of assembly, homodimer. In cyanobacteria the RNAP catalytic core is composed of 2 alpha, 1 beta, 1 beta', 1 gamma and 1 omega subunit. When a sigma factor is associated with the core the holoenzyme is formed, which can initiate transcription.

It carries out the reaction RNA(n) + a ribonucleoside 5'-triphosphate = RNA(n+1) + diphosphate. DNA-dependent RNA polymerase catalyzes the transcription of DNA into RNA using the four ribonucleoside triphosphates as substrates. This Synechocystis sp. (strain ATCC 27184 / PCC 6803 / Kazusa) protein is DNA-directed RNA polymerase subunit alpha.